Here is a 377-residue protein sequence, read N- to C-terminus: Glutamate 5-kinase (377 aa).

ATP is bound at residue Lys-20. Residues Ser-60, Asp-147, and Asn-159 each coordinate substrate. 179–180 contributes to the ATP binding site; the sequence is TD. The PUA domain maps to 285–363; sequence AGRLVIDAGA…DKVHQVLGEA (79 aa).

The protein belongs to the glutamate 5-kinase family.

Its subcellular location is the cytoplasm. It catalyses the reaction L-glutamate + ATP = L-glutamyl 5-phosphate + ADP. It functions in the pathway amino-acid biosynthesis; L-proline biosynthesis; L-glutamate 5-semialdehyde from L-glutamate: step 1/2. Catalyzes the transfer of a phosphate group to glutamate to form L-glutamate 5-phosphate. This chain is Glutamate 5-kinase, found in Acinetobacter baylyi (strain ATCC 33305 / BD413 / ADP1).